The sequence spans 714 residues: Structure-specific endonuclease subunit SLX4 1 (714 aa).

Composition is skewed to basic and acidic residues over residues 1 to 14 and 24 to 34; these read MSPE…EDNL and IHEETLAEESH. Disordered stretches follow at residues 1–116 and 337–369; these read MSPE…QGSI and DSSG…KTPQ. Residues 36-46 are compositionally biased toward low complexity; that stretch reads QSIQRSISRLS. Residues 79–92 are compositionally biased toward basic residues; it reads KTKKRKLKVSKPRK.

Belongs to the SLX4 family. In terms of assembly, forms a heterodimer with SLX1. Phosphorylated in response to DNA damage.

Its subcellular location is the nucleus. Its function is as follows. Regulatory subunit of the SLX1-SLX4 structure-specific endonuclease that resolves DNA secondary structures generated during DNA repair and recombination. Has endonuclease activity towards branched DNA substrates, introducing single-strand cuts in duplex DNA close to junctions with ss-DNA. The polypeptide is Structure-specific endonuclease subunit SLX4 1 (Candida tropicalis (strain ATCC MYA-3404 / T1) (Yeast)).